Consider the following 567-residue polypeptide: WD repeat-containing protein 20 (567 aa).

An N-acetylalanine modification is found at Ala2. 4 WD repeats span residues 147–187 (IDKS…GTTA), 216–257 (VGEG…GTMK), 258–297 (SYFGGLLCLCWSPDGKYIVTGGEDDLVTVWSFLDCRVIAR), and 345–389 (STQS…LFPH). Ser355 and Ser358 each carry phosphoserine. Positions 408–441 (PAGSNGSAVTTPGNSVPPPLPRSNSLPHSAVSNA) are disordered. Polar residues-rich tracts occupy residues 411–421 (SNGSAVTTPGN) and 429–441 (RSNSLPHSAVSNA). Phosphoserine occurs at positions 430, 432, and 463. The segment covering 468–481 (KERHHEKDRKRNHS) has biased composition (basic residues). The tract at residues 468-493 (KERHHEKDRKRNHSMGHISSKSSDKL) is disordered. A WD 5 repeat occupies 529-566 (IAHERLTVLVFLEDCIVTACQEGFICTWARPGKVSKFQ).

As to quaternary structure, interacts with USP12; promotes translocation of USP12/WDR20 to the plasma membrane. Component of the USP12/WDR20/WDR48 deubiquitinating complex. Interacts with USP46; contributes to the cytoplasmic localization of the USP46/WDR20 complex. Component of the USP12/DMWD/WDR48 deubiquitinating complex.

Its subcellular location is the cytoplasm. It is found in the nucleus. In terms of biological role, regulator of deubiquitinating complexes. Activates deubiquitinating activity of complexes containing USP12. Anchors at the base of the ubiquitin-contacting loop of USP12 and remotely modulates the catalytic center of the enzyme. Regulates shuttling of complexes containing USP12 between the plasma membrane, cytoplasm and nucleus. This chain is WD repeat-containing protein 20 (Wdr20), found in Mus musculus (Mouse).